Reading from the N-terminus, the 315-residue chain is Putative olfactory receptor 2I1 (315 aa).

Residues methionine 1–proline 24 lie on the Extracellular side of the membrane. Residues valine 25 to alanine 48 form a helical membrane-spanning segment. Over valine 49 to threonine 56 the chain is Cytoplasmic. The chain crosses the membrane as a helical span at residues proline 57–proline 78. Over proline 79–glutamine 99 the chain is Extracellular. Cysteine 96 and cysteine 188 form a disulfide bridge. Residues leucine 100–leucine 119 traverse the membrane as a helical segment. At aspartate 120–arginine 138 the chain is on the cytoplasmic side. Residues leucine 139 to alanine 157 form a helical membrane-spanning segment. Topologically, residues glutamine 158 to threonine 195 are extracellular. The helical transmembrane segment at glutamate 196–glycine 219 threads the bilayer. Residues alanine 220–arginine 236 lie on the Cytoplasmic side of the membrane. The chain crosses the membrane as a helical span at residues alanine 237–tyrosine 259. At leucine 260–lysine 272 the chain is on the extracellular side. The chain crosses the membrane as a helical span at residues phenylalanine 273–leucine 292. Topologically, residues arginine 293–glutamine 315 are cytoplasmic.

The protein belongs to the G-protein coupled receptor 1 family.

It is found in the cell membrane. In terms of biological role, odorant receptor. This is Putative olfactory receptor 2I1 from Homo sapiens (Human).